The primary structure comprises 341 residues: Type II methyltransferase M.NgoPII (341 aa).

One can recognise an SAM-dependent MTase C5-type domain in the interval 12-341 (MKIISLFSGC…AAAIKKTLER (330 aa)). Cys-84 is a catalytic residue.

This sequence belongs to the class I-like SAM-binding methyltransferase superfamily. C5-methyltransferase family.

It carries out the reaction a 2'-deoxycytidine in DNA + S-adenosyl-L-methionine = a 5-methyl-2'-deoxycytidine in DNA + S-adenosyl-L-homocysteine + H(+). Functionally, a methylase that recognizes the double-stranded sequence 5'-GGCC-3', methylates C-3 on both strands, and protects the DNA from cleavage by the NgoPII endonuclease. This chain is Type II methyltransferase M.NgoPII (ngoPIIM), found in Neisseria gonorrhoeae.